Reading from the N-terminus, the 357-residue chain is DNA replication and repair protein RecF (357 aa).

31–38 (GQNGAGKT) lines the ATP pocket.

It belongs to the RecF family.

It is found in the cytoplasm. Functionally, the RecF protein is involved in DNA metabolism; it is required for DNA replication and normal SOS inducibility. RecF binds preferentially to single-stranded, linear DNA. It also seems to bind ATP. The sequence is that of DNA replication and repair protein RecF from Coxiella burnetii (strain CbuK_Q154) (Coxiella burnetii (strain Q154)).